A 186-amino-acid polypeptide reads, in one-letter code: UPF0301 protein NTHI0415 (186 aa).

It belongs to the UPF0301 (AlgH) family.

This chain is UPF0301 protein NTHI0415, found in Haemophilus influenzae (strain 86-028NP).